A 326-amino-acid chain; its full sequence is S-methyl-5'-thioadenosine phosphorylase (326 aa).

Phosphate contacts are provided by residues serine 44, 86-87 (RH), and 119-120 (SA). Methionine 220 serves as a coordination point for substrate. A phosphate-binding site is contributed by threonine 221. 244-246 (DYD) contributes to the substrate binding site.

It belongs to the PNP/MTAP phosphorylase family. MTAP subfamily. Homohexamer. Dimer of a homotrimer.

The enzyme catalyses S-methyl-5'-thioadenosine + phosphate = 5-(methylsulfanyl)-alpha-D-ribose 1-phosphate + adenine. Its pathway is amino-acid biosynthesis; L-methionine biosynthesis via salvage pathway; S-methyl-5-thio-alpha-D-ribose 1-phosphate from S-methyl-5'-thioadenosine (phosphorylase route): step 1/1. Its function is as follows. Catalyzes the reversible phosphorylation of S-methyl-5'-thioadenosine (MTA) to adenine and 5-methylthioribose-1-phosphate. Involved in the breakdown of MTA, a major by-product of polyamine biosynthesis. Responsible for the first step in the methionine salvage pathway after MTA has been generated from S-adenosylmethionine. Has broad substrate specificity with 6-aminopurine nucleosides as preferred substrates. This Synechocystis sp. (strain PCC 6803 / GT-S) protein is S-methyl-5'-thioadenosine phosphorylase.